A 635-amino-acid polypeptide reads, in one-letter code: Threonine--tRNA ligase (635 aa).

The 61-residue stretch at 1-61 folds into the TGS domain; that stretch reads MVSIRLPDGS…DHDVALAIVT (61 aa). The segment at 242–533 is catalytic; it reads DHRKLGKQLD…LIEHHAGAMP (292 aa). Zn(2+) contacts are provided by Cys333, His384, and His510.

The protein belongs to the class-II aminoacyl-tRNA synthetase family. In terms of assembly, homodimer. Zn(2+) serves as cofactor.

The protein localises to the cytoplasm. It catalyses the reaction tRNA(Thr) + L-threonine + ATP = L-threonyl-tRNA(Thr) + AMP + diphosphate + H(+). Catalyzes the attachment of threonine to tRNA(Thr) in a two-step reaction: L-threonine is first activated by ATP to form Thr-AMP and then transferred to the acceptor end of tRNA(Thr). Also edits incorrectly charged L-seryl-tRNA(Thr). This chain is Threonine--tRNA ligase, found in Paraburkholderia xenovorans (strain LB400).